Reading from the N-terminus, the 271-residue chain is Tryptophan synthase alpha chain (271 aa).

Active-site proton acceptor residues include glutamate 49 and aspartate 60.

Belongs to the TrpA family. Tetramer of two alpha and two beta chains.

It catalyses the reaction (1S,2R)-1-C-(indol-3-yl)glycerol 3-phosphate + L-serine = D-glyceraldehyde 3-phosphate + L-tryptophan + H2O. Its pathway is amino-acid biosynthesis; L-tryptophan biosynthesis; L-tryptophan from chorismate: step 5/5. In terms of biological role, the alpha subunit is responsible for the aldol cleavage of indoleglycerol phosphate to indole and glyceraldehyde 3-phosphate. The protein is Tryptophan synthase alpha chain of Buchnera aphidicola subsp. Schizaphis graminum (strain Sg).